The sequence spans 209 residues: Octanoyltransferase (209 aa).

Residues 30-209 (DHEPEIIYLV…IQTEFNKIFK (180 aa)) enclose the BPL/LPL catalytic domain. Residues 69-76 (RGGKFTFH), 143-145 (AIG), and 156-158 (GVA) contribute to the substrate site. Cysteine 174 functions as the Acyl-thioester intermediate in the catalytic mechanism.

It belongs to the LipB family.

The protein resides in the cytoplasm. It carries out the reaction octanoyl-[ACP] + L-lysyl-[protein] = N(6)-octanoyl-L-lysyl-[protein] + holo-[ACP] + H(+). Its pathway is protein modification; protein lipoylation via endogenous pathway; protein N(6)-(lipoyl)lysine from octanoyl-[acyl-carrier-protein]: step 1/2. Catalyzes the transfer of endogenously produced octanoic acid from octanoyl-acyl-carrier-protein onto the lipoyl domains of lipoate-dependent enzymes. Lipoyl-ACP can also act as a substrate although octanoyl-ACP is likely to be the physiological substrate. The chain is Octanoyltransferase from Rickettsia africae (strain ESF-5).